The sequence spans 491 residues: Probable glycine dehydrogenase (decarboxylating) subunit 2 (491 aa).

Lysine 273 carries the N6-(pyridoxal phosphate)lysine modification.

It belongs to the GcvP family. C-terminal subunit subfamily. The glycine cleavage system is composed of four proteins: P, T, L and H. In this organism, the P 'protein' is a heterodimer of two subunits. Pyridoxal 5'-phosphate serves as cofactor.

It catalyses the reaction N(6)-[(R)-lipoyl]-L-lysyl-[glycine-cleavage complex H protein] + glycine + H(+) = N(6)-[(R)-S(8)-aminomethyldihydrolipoyl]-L-lysyl-[glycine-cleavage complex H protein] + CO2. In terms of biological role, the glycine cleavage system catalyzes the degradation of glycine. The P protein binds the alpha-amino group of glycine through its pyridoxal phosphate cofactor; CO(2) is released and the remaining methylamine moiety is then transferred to the lipoamide cofactor of the H protein. This Bacillus cereus (strain AH187) protein is Probable glycine dehydrogenase (decarboxylating) subunit 2.